A 596-amino-acid chain; its full sequence is Lamin-B2 (596 aa).

Positions 1–20 are disordered; it reads MASLPPHAGPATPLSPTRLS. The segment at 1-26 is head; that stretch reads MASLPPHAGPATPLSPTRLSRLQEKE. T12 carries the phosphothreonine modification. Position 15 is a phosphoserine (S15). The region spanning 24-380 is the IF rod domain; sequence EKEELRELND…KLLEGEEERL (357 aa). Residues 27–61 form a coil 1A region; it reads ELRELNDRLAHYIDRVRALELENDRLLLRISEKEE. Residue K59 is modified to N6-acetyllysine; alternate. A Glycyl lysine isopeptide (Lys-Gly) (interchain with G-Cter in SUMO2); alternate cross-link involves residue K59. The tract at residues 62–73 is linker 1; it reads VTTREVSGIKTL. The tract at residues 74–207 is coil 1B; that stretch reads YESELADARR…AFSKSVFEEE (134 aa). Residues K173 and K233 each participate in a glycyl lysine isopeptide (Lys-Gly) (interchain with G-Cter in SUMO2) cross-link. The segment at 208–234 is linker 2; sequence VRETRRRHERRLVEVDSSRQQEYDFKM. The segment at 235 to 378 is coil 2; sequence AQALEDLRSQ…YRKLLEGEEE (144 aa). Phosphoserine is present on residues S294 and S385. The segment at 376–440 is disordered; that stretch reads EEERLKLSPS…ASRVSSGSRL (65 aa). The interval 379 to 596 is tail; the sequence is RLKLSPSPSS…RTTSRGCRLM (218 aa). The segment covering 382–403 has biased composition (low complexity); it reads LSPSPSSRITISRATSSSSSSS. T391 is a glycosylation site (O-linked (GlcNAc) threonine). Residues S398, S400, and S402 each carry the phosphoserine modification. R413 is modified (omega-N-methylarginine). The short motif at 415–420 is the Nuclear localization signal element; it reads KRRRLE. Over residues 425–439 the composition is skewed to low complexity; that stretch reads SGSPSRASRVSSGSR. In terms of domain architecture, LTD spans 438-559; that stretch reads SRLAQQTVAT…VKAAKHSSVQ (122 aa). A Glycyl lysine isopeptide (Lys-Gly) (interchain with G-Cter in SUMO2) cross-link involves residue K465. S473 carries the phosphoserine modification. The interval 552 to 596 is disordered; sequence AAKHSSVQGRENGEEEEEEEAEFGEEDLFHQQGDPRTTSRGCRLM. Over residues 564 to 577 the composition is skewed to acidic residues; sequence GEEEEEEEAEFGEE. Polar residues predominate over residues 585-596; sequence DPRTTSRGCRLM. A Cysteine methyl ester modification is found at C593. C593 carries S-farnesyl cysteine lipidation. Positions 594–596 are cleaved as a propeptide — removed in mature form; the sequence is RLM.

The protein belongs to the intermediate filament family. As to quaternary structure, dimer. Lamin dimers then assemble into dimeric head-to-tail polymers. Ultimately, two head-to-tail polymers assemble laterally into a protofilament with a uniformly shaped rod of 3.5 nm in diameter. Interacts with TMEM43. In terms of processing, B-type lamins undergo a series of modifications, such as farnesylation and phosphorylation. Increased phosphorylation of the lamins occurs before envelope disintegration and probably plays a role in regulating lamin associations. Phosphorylation plays a key role in lamin organization, subcellular localization and nuclear envelope disintegration. Phosphorylation by CDK1 at Ser-15 and Ser-385 at the onset of mitosis drives lamin disassembly and nuclear envelope breakdown. As to expression, germ cell-specific.

Its subcellular location is the nucleus lamina. Lamins are intermediate filament proteins that assemble into a filamentous meshwork, and which constitute the major components of the nuclear lamina, a fibrous layer on the nucleoplasmic side of the inner nuclear membrane. Lamins provide a framework for the nuclear envelope, bridging the nuclear envelope and chromatin, thereby playing an important role in nuclear assembly, chromatin organization, nuclear membrane and telomere dynamics. The structural integrity of the lamina is strictly controlled by the cell cycle, as seen by the disintegration and formation of the nuclear envelope in prophase and telophase, respectively. The polypeptide is Lamin-B2 (Lmnb2) (Mus musculus (Mouse)).